A 588-amino-acid chain; its full sequence is MQCIPKKTFMAMLRIPEVRSNLAAYLRTALMVQEVKNHDDMVHLKALSSEENEDFEICIPGGTYLELFRNPVLRSHLSAMERSYKFPGRFLSEEVDSRDLIPESEKRSLATLAKNGDLPITIQERESDNDDEEKRSASSSDNVGSLHELFDEVSYRRRTPEIYDYLTEQDPEVLEYSPDKRNVGSLARDFALPTGRRHIASVARDHGLPSGKRNVGSLARQSMLPLSGKRNVASLARYYMLPQSGKRNVAALARDSSLPYGKRYLGSLARSGSYPTRDYDEGKRSIASLARSGDWPSVAKRGRMTSGRIMARVLNRRYGRSLSDDREAPSEPLDLQQLIRQGNSEGKENEWQATPFTVSEDLDEGKAKNRSNRRIEASQTRHKRQIDFSDEYPLPVMQNNMLDYEDMMEAIADHYPNAEKRFMGQTVSQPPLRVFRRVLFSYLDVMSTVFCRTCNQVEPHLLQTEKIYHIYVCQYQQIYQPHHVKDNPNTNEPTTMYNHYVQKKCSPMSSSSTHGIITVVRENPADGSSSNYTPDASTRSLRPIFTPKTRYLQSLHGDCRHGFKRFLLLPDIDNFLRTSNSHIAPRSM.

The propeptide occupies 1–179 (MQCIPKKTFM…DPEVLEYSPD (179 aa)). The interval 115 to 143 (NGDLPITIQERESDNDDEEKRSASSSDNV) is disordered. Threonine amide is present on T194. Serine amide is present on residues S210, S227, and S244. Y260 carries the post-translational modification Tyrosine amide. At E281 the chain carries Glutamic acid 1-amide. Positions 285–299 (SIASLARSGDWPSVA) are excised as a propeptide. Y318 is subject to Tyrosine amide. Residues 321 to 588 (SLSDDREAPS…SNSHIAPRSM (268 aa)) constitute a propeptide that is removed on maturation. A disordered region spans residues 342 to 382 (GNSEGKENEWQATPFTVSEDLDEGKAKNRSNRRIEASQTRH).

It localises to the secreted. This is Neuropeptide-like 1 from Camponotus floridanus (Florida carpenter ant).